The chain runs to 44 residues: Conotoxin S5.1 (44 aa).

Contains 3 disulfide bonds. In terms of tissue distribution, expressed by the venom duct.

The protein localises to the secreted. The polypeptide is Conotoxin S5.1 (Conus striatus (Striated cone)).